Consider the following 339-residue polypeptide: UDP-N-acetylenolpyruvoylglucosamine reductase (339 aa).

Residues 16 to 188 (GIAATARYYS…LQVTLRLNKQ (173 aa)) form the FAD-binding PCMH-type domain. R164 is a catalytic residue. S238 (proton donor) is an active-site residue. The active site involves E334.

This sequence belongs to the MurB family. The cofactor is FAD.

The protein resides in the cytoplasm. It catalyses the reaction UDP-N-acetyl-alpha-D-muramate + NADP(+) = UDP-N-acetyl-3-O-(1-carboxyvinyl)-alpha-D-glucosamine + NADPH + H(+). The protein operates within cell wall biogenesis; peptidoglycan biosynthesis. Its function is as follows. Cell wall formation. The protein is UDP-N-acetylenolpyruvoylglucosamine reductase of Amoebophilus asiaticus (strain 5a2).